Consider the following 249-residue polypeptide: Chitooligosaccharide deacetylase (249 aa).

Mg(2+) is bound by residues His-61 and His-125.

Belongs to the YdjC deacetylase family. ChbG subfamily. In terms of assembly, homodimer. Requires Mg(2+) as cofactor.

The protein resides in the cytoplasm. The enzyme catalyses N,N'-diacetylchitobiose + H2O = N-acetyl-beta-D-glucosaminyl-(1-&gt;4)-D-glucosamine + acetate. It carries out the reaction diacetylchitobiose-6'-phosphate + H2O = N'-monoacetylchitobiose-6'-phosphate + acetate. It functions in the pathway glycan degradation; chitin degradation. Involved in the degradation of chitin. ChbG is essential for growth on the acetylated chitooligosaccharides chitobiose and chitotriose but is dispensable for growth on cellobiose and chitosan dimer, the deacetylated form of chitobiose. Deacetylation of chitobiose-6-P and chitotriose-6-P is necessary for both the activation of the chb promoter by the regulatory protein ChbR and the hydrolysis of phosphorylated beta-glucosides by the phospho-beta-glucosidase ChbF. Catalyzes the removal of only one acetyl group from chitobiose-6-P to yield monoacetylchitobiose-6-P, the inducer of ChbR and the substrate of ChbF. The polypeptide is Chitooligosaccharide deacetylase (Escherichia coli O9:H4 (strain HS)).